Consider the following 257-residue polypeptide: Protein YIPF5 (257 aa).

The Cytoplasmic portion of the chain corresponds to 1–124; that stretch reads MSGFDNFNTD…KASDGSIMNE (124 aa). A helical membrane pass occupies residues 125–145; that stretch reads TDLAGPMVFCLAFGATLLLTG. Position 146 (lysine 146) is a topological domain, lumenal. Residues 147–167 traverse the membrane as a helical segment; that stretch reads IQFGYVYGISAIGCLGMYCLL. Over 168 to 173 the chain is Cytoplasmic; sequence NLMSMT. Residues 174–194 form a helical membrane-spanning segment; it reads GVSFGCVASVLGYCLLPMIIL. Topologically, residues 195 to 196 are lumenal; sequence SS. Residues 197-217 traverse the membrane as a helical segment; the sequence is FGVIFSLQGIMGIILTAAIIG. The Cytoplasmic segment spans residues 218–236; sequence WCSLSASKIFISALAMDGQ. A helical membrane pass occupies residues 237–257; the sequence is QLLVAYPCALLYGVFALISVF.

Belongs to the YIP1 family.

It is found in the endoplasmic reticulum membrane. Its subcellular location is the golgi apparatus. The protein resides in the cis-Golgi network membrane. In terms of biological role, plays a role in transport between endoplasmic reticulum and Golgi. The chain is Protein YIPF5 (yipf5) from Danio rerio (Zebrafish).